The chain runs to 1117 residues: A disintegrin and metalloproteinase with thrombospondin motifs 6 (1117 aa).

The N-terminal stretch at 1 to 21 is a signal peptide; the sequence is MEILWKTLTWILSLIMASSEF. Residues 22–244 constitute a propeptide that is removed on maturation; the sequence is HSDHRLSYSS…NTHIHHRQKR (223 aa). 4 N-linked (GlcNAc...) asparagine glycosylation sites follow: asparagine 99, asparagine 172, asparagine 222, and asparagine 234. The Peptidase M12B domain maps to 250-468; the sequence is RFVETLVVAD…GRGTCLDNEP (219 aa). 11 disulfides stabilise this stretch: cysteine 326/cysteine 387, cysteine 362/cysteine 369, cysteine 381/cysteine 463, cysteine 420/cysteine 447, cysteine 490/cysteine 512, cysteine 501/cysteine 519, cysteine 507/cysteine 542, cysteine 532/cysteine 547, cysteine 570/cysteine 607, cysteine 574/cysteine 612, and cysteine 585/cysteine 597. Residue histidine 403 participates in Zn(2+) binding. Glutamate 404 is an active-site residue. Zn(2+) contacts are provided by histidine 407 and histidine 413. Positions 495–557 constitute a Disintegrin domain; it reads GATSRQCKYG…VPFGTWPQSI (63 aa). Residues 558-613 form the TSP type-1 1 domain; it reads DGGWGPWSLWGECSRTCGGGVSSSLRHCDSPAPSGGGKYCLGERKRYRSCNTDPCP. Positions 717-843 are spacer; it reads DAIEGFFNDS…GSGDNEVGFT (127 aa). Residue asparagine 724 is glycosylated (N-linked (GlcNAc...) asparagine). TSP type-1 domains follow at residues 840–900, 902–960, 962–1007, and 1018–1073; these read VGFT…EPCP, EWFI…QSCP, QWVA…SKPP, and PPPR…SKCD. 3 cysteine pairs are disulfide-bonded: cysteine 911-cysteine 954, cysteine 915-cysteine 959, and cysteine 926-cysteine 943. N-linked (GlcNAc...) asparagine glycosylation occurs at asparagine 956. The PLAC domain maps to 1079 to 1117; that stretch reads NTEECKDVNKVAYCPLVLKFKFCSRAYFRQMCCKTCQGH.

It depends on Zn(2+) as a cofactor. In terms of processing, the precursor is cleaved by a furin endopeptidase. Glycosylated. Can be O-fucosylated by POFUT2 on a serine or a threonine residue found within the consensus sequence C1-X(2)-(S/T)-C2-G of the TSP type-1 repeat domains where C1 and C2 are the first and second cysteine residue of the repeat, respectively. Fucosylated repeats can then be further glycosylated by the addition of a beta-1,3-glucose residue by the glucosyltransferase, B3GALTL. Fucosylation mediates the efficient secretion of ADAMTS family members. Can also be C-glycosylated with one or two mannose molecules on tryptophan residues within the consensus sequence W-X-X-W of the TPRs, and N-glycosylated. These other glycosylations can also facilitate secretion. In terms of tissue distribution, expressed at low levels in placenta and barely detectable in a number of other tissues.

The protein localises to the secreted. The protein resides in the extracellular space. Its subcellular location is the extracellular matrix. This chain is A disintegrin and metalloproteinase with thrombospondin motifs 6 (ADAMTS6), found in Homo sapiens (Human).